Reading from the N-terminus, the 238-residue chain is Thiamine import ATP-binding protein ThiQ (238 aa).

In terms of domain architecture, ABC transporter spans 1–234; sequence MSSTALAVKG…RDIAAINRFL (234 aa). An ATP-binding site is contributed by 36-43; the sequence is GASGSGKS.

This sequence belongs to the ABC transporter superfamily. Thiamine importer (TC 3.A.1.19.1) family. The complex is composed of two ATP-binding proteins (ThiQ), two transmembrane proteins (ThiP) and a solute-binding protein (ThiB).

The protein localises to the cell inner membrane. The enzyme catalyses thiamine(out) + ATP + H2O = thiamine(in) + ADP + phosphate + H(+). Functionally, part of the ABC transporter complex ThiBPQ involved in thiamine import. Responsible for energy coupling to the transport system. In Rhizobium meliloti (strain 1021) (Ensifer meliloti), this protein is Thiamine import ATP-binding protein ThiQ.